A 640-amino-acid polypeptide reads, in one-letter code: MGERTLHAAVPTPGYPESESIMMAPICLVENQEEQLTVNSKALEILDKISQPVVVVAIVGLYRTGKSYLMNRLAGKRNGFPLGSTVQSETKGIWMWCVPHLSKPNHTLVLLDTEGLGDVEKSNPKNDSWIFALAVLLSSSFVYNSVSTINHQALEQLHYVTELAELIRAKSCPRPDEAEDSSEFASFFPDFIWTVRDFTLELKLDGNPITEDEYLENALKLIPGKNPKIQNSNMPRECIRHFFRKRKCFVFDRPTNDKQYLNHMDEVPEENLERHFLMQSDNFCSYIFTHAKTKTLREGIIVTGKRLGTLVVTYVDAINSGAVPCLENAVTALAQLENPAAVQRAADHYSQQMAQQLRLPTDTLQELLDVHAACEREAIAVFMEHSFKDENHEFQKKLVDTIEKKKGDFVLQNEEASAKYCQAELKRLSEHLTESILRGIFSVPGGHNLYLEEKKQVEWDYKLVPRKGVKANEVLQNFLQSQVVVEESILQSDKALTAGEKAIAAERAMKEAAEKEQELLREKQKEQQQMMEAQERSFQEYMAQMEKKLEEERENLLREHERLLKHKLKVQEEMLKEEFQKKSEQLNKEINQLKEKIESTKNEQLRLLKILDMASNIMIVTLPGASKLLGVGTKYLGSRI.

Residues 1–325 form a GTPase domain (Globular) region; sequence MGERTLHAAV…DAINSGAVPC (325 aa). The 243-residue stretch at 50-292 folds into the GB1/RHD3-type G domain; it reads SQPVVVVAIV…FCSYIFTHAK (243 aa). Residues 60–67, 82–84, and 112–116 each bind GTP; these read GLYRTGKS, LGS, and DTEGL. Positions 499-612 form a coiled coil; sequence GEKAIAAERA…EQLRLLKILD (114 aa).

The protein belongs to the TRAFAC class dynamin-like GTPase superfamily. GB1/RHD3 GTPase family. GB1 subfamily. Heterodimer with other family members, including GBP1, GBP2 and GBP5. Dimerization regulates subcellular location. Interacts with IRF7; preventing interaction between TRAF6 and IRF7, resulting in impaired TRAF6-mediated IRF7 ubiquitination. (Microbial infection) Ubiquitinated by S.flexneri IpaH9.8, leading to its degradation by the proteasome, thereby preventing its ability to promote host defense against bacterial infection.

Its subcellular location is the golgi apparatus membrane. It localises to the cytoplasm. It is found in the nucleus. The protein resides in the perinuclear region. It carries out the reaction GTP + H2O = GDP + phosphate + H(+). Interferon (IFN)-inducible GTPase that plays important roles in innate immunity against a diverse range of bacterial, viral and protozoan pathogens. Negatively regulates the antiviral response by inhibiting activation of IRF7 transcription factor. The polypeptide is Guanylate-binding protein 4 (Homo sapiens (Human)).